The following is a 340-amino-acid chain: 4-hydroxythreonine-4-phosphate dehydrogenase (340 aa).

Threonine 135 is a substrate binding site. A divalent metal cation contacts are provided by histidine 170, histidine 215, and histidine 276. Lysine 284, asparagine 293, and arginine 302 together coordinate substrate.

This sequence belongs to the PdxA family. Homodimer. The cofactor is a divalent metal cation.

The protein resides in the cytoplasm. The catalysed reaction is 4-(phosphooxy)-L-threonine + NAD(+) = 3-amino-2-oxopropyl phosphate + CO2 + NADH. It functions in the pathway cofactor biosynthesis; pyridoxine 5'-phosphate biosynthesis; pyridoxine 5'-phosphate from D-erythrose 4-phosphate: step 4/5. Its function is as follows. Catalyzes the NAD(P)-dependent oxidation of 4-(phosphooxy)-L-threonine (HTP) into 2-amino-3-oxo-4-(phosphooxy)butyric acid which spontaneously decarboxylates to form 3-amino-2-oxopropyl phosphate (AHAP). The polypeptide is 4-hydroxythreonine-4-phosphate dehydrogenase (Synechococcus sp. (strain JA-2-3B'a(2-13)) (Cyanobacteria bacterium Yellowstone B-Prime)).